The sequence spans 150 residues: Large ribosomal subunit protein bL9 (150 aa).

This sequence belongs to the bacterial ribosomal protein bL9 family.

Functionally, binds to the 23S rRNA. The polypeptide is Large ribosomal subunit protein bL9 (Thioalkalivibrio sulfidiphilus (strain HL-EbGR7)).